A 125-amino-acid chain; its full sequence is Histone H2B type 1 (125 aa).

The disordered stretch occupies residues 1-36; sequence MPEPAKSRPAPKKGSKKAVTKAQKKDGKERKRSRKE. An N-acetylproline modification is found at Pro2. Glu3 is subject to ADP-ribosyl glutamic acid. Lys6 carries the N6-(2-hydroxyisobutyryl)lysine; alternate modification. An N6-(beta-hydroxybutyryl)lysine; alternate modification is found at Lys6. Lys6 bears the N6-acetyllysine; alternate mark. Residue Lys6 is modified to N6-butyryllysine; alternate. Residue Lys6 is modified to N6-crotonyllysine; alternate. N6-lactoyllysine; alternate is present on Lys6. Lys6 is covalently cross-linked (Glycyl lysine isopeptide (Lys-Gly) (interchain with G-Cter in SUMO2); alternate). Ser7 is modified (ADP-ribosylserine). A compositionally biased stretch (basic residues) spans 9–19; the sequence is PAPKKGSKKAV. Lys12 is subject to N6-(beta-hydroxybutyryl)lysine; alternate. N6-acetyllysine; alternate occurs at positions 12 and 13. Lys12 and Lys13 each carry N6-crotonyllysine; alternate. Lys12 carries the N6-lactoyllysine; alternate modification. An N6-(2-hydroxyisobutyryl)lysine; alternate modification is found at Lys13. Phosphoserine; by STK4/MST1 is present on Ser15. N6-acetyllysine; alternate is present on residues Lys16, Lys17, Lys21, and Lys24. N6-crotonyllysine; alternate is present on residues Lys16, Lys17, Lys21, and Lys24. An N6-lactoyllysine; alternate mark is found at Lys16, Lys17, Lys21, and Lys24. Position 17 is an N6-glutaryllysine; alternate (Lys17). Lys21 and Lys24 each carry N6-(2-hydroxyisobutyryl)lysine; alternate. The residue at position 21 (Lys21) is an N6-(beta-hydroxybutyryl)lysine; alternate. Lys21 carries the post-translational modification N6-butyryllysine; alternate. Residue Lys21 forms a Glycyl lysine isopeptide (Lys-Gly) (interchain with G-Cter in SUMO2); alternate linkage. The residue at position 25 (Lys25) is an N6-(2-hydroxyisobutyryl)lysine. An N6-(2-hydroxyisobutyryl)lysine; alternate modification is found at Lys35. Lys35 bears the N6-(beta-hydroxybutyryl)lysine; alternate mark. Lys35 carries the post-translational modification N6-crotonyllysine; alternate. The residue at position 35 (Lys35) is an N6-glutaryllysine; alternate. The residue at position 35 (Lys35) is an N6-succinyllysine; alternate. Residue Lys35 forms a Glycyl lysine isopeptide (Lys-Gly) (interchain with G-Cter in ubiquitin); alternate linkage. A PolyADP-ribosyl glutamic acid modification is found at Glu36. Ser37 carries the phosphoserine; by AMPK modification. N6-(2-hydroxyisobutyryl)lysine; alternate occurs at positions 44, 47, and 58. The residue at position 44 (Lys44) is an N6-lactoyllysine; alternate. Lys44 and Lys47 each carry N6-glutaryllysine; alternate. Lys47 carries the post-translational modification N6-methyllysine; alternate. N6,N6-dimethyllysine; alternate is present on Lys58. Arg79 carries the dimethylated arginine modification. Lys85 bears the N6-(2-hydroxyisobutyryl)lysine; alternate mark. Position 85 is an N6-acetyllysine; alternate (Lys85). Lys85 carries the post-translational modification N6-lactoyllysine; alternate. Lys85 carries the N6,N6,N6-trimethyllysine; alternate modification. An omega-N-methylarginine mark is found at Arg86 and Arg92. The residue at position 108 (Lys108) is an N6-(2-hydroxyisobutyryl)lysine; alternate. Lys108 carries the post-translational modification N6-lactoyllysine; alternate. Lys108 carries the N6-glutaryllysine; alternate modification. N6-methyllysine; alternate is present on Lys108. Residue Ser112 is glycosylated (O-linked (GlcNAc) serine). A Phosphothreonine modification is found at Thr115. 2 positions are modified to N6-(2-hydroxyisobutyryl)lysine; alternate: Lys116 and Lys120. Lys116 carries the post-translational modification N6-(beta-hydroxybutyryl)lysine; alternate. Residues Lys116 and Lys120 each carry the N6-lactoyllysine; alternate modification. Lys116 and Lys120 each carry N6-glutaryllysine; alternate. 2 positions are modified to N6-succinyllysine; alternate: Lys116 and Lys120. The residue at position 116 (Lys116) is an N6-methylated lysine; alternate. A Glycyl lysine isopeptide (Lys-Gly) (interchain with G-Cter in ubiquitin); alternate cross-link involves residue Lys120.

The protein belongs to the histone H2B family. As to quaternary structure, the nucleosome is a histone octamer containing two molecules each of H2A, H2B, H3 and H4 assembled in one H3-H4 heterotetramer and two H2A-H2B heterodimers. The octamer wraps approximately 147 bp of DNA. Post-translationally, monoubiquitination at Lys-35 (H2BK34Ub) by the MSL1/MSL2 dimer is required for histone H3 'Lys-4' (H3K4me) and 'Lys-79' (H3K79me) methylation and transcription activation at specific gene loci, such as HOXA9 and MEIS1 loci. Similarly, monoubiquitination at Lys-120 (H2BK120Ub) by the RNF20/40 complex gives a specific tag for epigenetic transcriptional activation and is also prerequisite for histone H3 'Lys-4' and 'Lys-79' methylation. It also functions cooperatively with the FACT dimer to stimulate elongation by RNA polymerase II. H2BK120Ub also acts as a regulator of mRNA splicing: deubiquitination by USP49 is required for efficient cotranscriptional splicing of a large set of exons. Phosphorylated on Ser-15 (H2BS14ph) by STK4/MST1 during apoptosis; which facilitates apoptotic chromatin condensation. Also phosphorylated on Ser-15 in response to DNA double strand breaks (DSBs), and in correlation with somatic hypermutation and immunoglobulin class-switch recombination. Phosphorylation at Ser-37 (H2BS36ph) by AMPK in response to stress promotes transcription. In terms of processing, ADP-ribosylated by PARP1 or PARP2 on Ser-7 (H2BS6ADPr) in response to DNA damage. H2BS6ADPr promotes recruitment of CHD1L. Mono-ADP-ribosylated on Glu-3 (H2BE2ADPr) by PARP3 in response to single-strand breaks. Poly ADP-ribosylation on Glu-36 (H2BE35ADPr) by PARP1 regulates adipogenesis: it inhibits phosphorylation at Ser-37 (H2BS36ph), thereby blocking expression of pro-adipogenetic genes. Post-translationally, crotonylation (Kcr) is specifically present in male germ cells and marks testis-specific genes in post-meiotic cells, including X-linked genes that escape sex chromosome inactivation in haploid cells. Crotonylation marks active promoters and enhancers and confers resistance to transcriptional repressors. It is also associated with post-meiotically activated genes on autosomes. GlcNAcylation at Ser-112 promotes monoubiquitination of Lys-120. It fluctuates in response to extracellular glucose, and associates with transcribed genes. In terms of processing, lactylated in macrophages by EP300/P300 by using lactoyl-CoA directly derived from endogenous or exogenous lactate, leading to stimulates gene transcription.

The protein localises to the nucleus. The protein resides in the chromosome. In terms of biological role, core component of nucleosome. Nucleosomes wrap and compact DNA into chromatin, limiting DNA accessibility to the cellular machineries which require DNA as a template. Histones thereby play a central role in transcription regulation, DNA repair, DNA replication and chromosomal stability. DNA accessibility is regulated via a complex set of post-translational modifications of histones, also called histone code, and nucleosome remodeling. Has broad antibacterial activity. May contribute to the formation of the functional antimicrobial barrier of the colonic epithelium, and to the bactericidal activity of amniotic fluid. The chain is Histone H2B type 1 from Rattus norvegicus (Rat).